The following is a 935-amino-acid chain: MANRLQRGDRSRLLLLLCIFLGTLRGFRARQIRYSVPEETEKGSFVGNISKDLGLEPRELAKRGVRIVSRGKTQLFAVNPRSGSLITAGRIDREELCETVSSCFLNMELLVEDTLKIYGVEVEIIDINDNAPSFQEDEVEIKVSEHAIPGARFALPNARDPDVGVNSLQSYQLSPNNYFSLQLRGRTDGAKNPELVLEGSLDREKEAAHLLLLTALDGGDPIRKGAVPIRVVVLDVNDHIPMFTQSVYRVSVPENISSGTRVLMVNATDPDEGINGEVMYSFRNMESKASEIFQLDSQTGEVQVRGSLDFEKYRFYEMEIQGQDGGGLFTTTTMLITVVDVNDNAPEITITSSINSILENSPPGTVIALLNVQDQDSGENGQVSCFIPNHLPFKLEKTYGNYYKLITSRVLDRELVQSYNITLTATDQGSPPLSAETHVWLNVADDNDNPPVFPHSSYSAYIPENNPRGASIFSVTALDPDSKQNALVTYSLTDDTVQGVPLSSYVSINSNTGVLYALQSFDYEQFRDLELRVIARDSGDPPLSSNVSLSLFVLDQNDNAPEILYPALPTDGSTGVELAPRSAEPGYLVTKVVAVDKDSGQNAWLSYRLLKASEPGLFAVGEHTGEVRTARALLDRDALKQSLVVAVQDHGQPPLSATVTLTVAVADSIPEVLADLGSLESLANSETSDLSLYLVVAVAAVSCIFLVFVIVLLALRLWRWHKSRLLQASEGGLAGMPTSHFVGVDGVQAFLQTYSHEVSLIADSQKSHLIFPQPNYGDTLISQESCEKSEPLLIAEDSAIILGKCDPTSNQQAPPNTDWRFSQAQRPGTSGSQNGDDTGTWPNNQFDTEMLQAMILASASEAADGSSTLGGGAGTMGLSARYGPQFTLQHVPDYRQNVYIPGSNATLTNAAGKRDGKAPAGGNGNKKKSGKKEKK.

The first 29 residues, 1–29 (MANRLQRGDRSRLLLLLCIFLGTLRGFRA), serve as a signal peptide directing secretion. 6 Cadherin domains span residues 30 to 134 (RQIR…APSF), 135 to 243 (QEDE…IPMF), 244 to 348 (TQSV…APEI), 349 to 453 (TITS…PPVF), 454 to 563 (PHSS…APEI), and 571 to 677 (DGST…ADLG). At 30 to 693 (RQIRYSVPEE…NSETSDLSLY (664 aa)) the chain is on the extracellular side. An N-linked (GlcNAc...) asparagine glycan is attached at N48. 4 N-linked (GlcNAc...) asparagine glycosylation sites follow: N255, N266, N420, and N546. A helical transmembrane segment spans residues 694–714 (LVVAVAAVSCIFLVFVIVLLA). Topologically, residues 715–935 (LRLWRWHKSR…KKKSGKKEKK (221 aa)) are cytoplasmic. 2 disordered regions span residues 805 to 844 (CDPT…WPNN) and 905 to 935 (ATLT…KEKK). Positions 807–844 (PTSNQQAPPNTDWRFSQAQRPGTSGSQNGDDTGTWPNN) are enriched in polar residues. Positions 925 to 935 (NKKKSGKKEKK) are enriched in basic residues.

The protein localises to the cell membrane. Functionally, potential calcium-dependent cell-adhesion protein. May be involved in the establishment and maintenance of specific neuronal connections in the brain. The chain is Protocadherin gamma-A11 (PCDHGA11) from Homo sapiens (Human).